We begin with the raw amino-acid sequence, 505 residues long: Maturase K (505 aa).

The protein belongs to the intron maturase 2 family. MatK subfamily.

The protein resides in the plastid. It is found in the chloroplast. Its function is as follows. Usually encoded in the trnK tRNA gene intron. Probably assists in splicing its own and other chloroplast group II introns. The chain is Maturase K from Silene otites (Spanish catchfly).